The primary structure comprises 135 residues: Protein PsiE homolog (135 aa).

4 helical membrane-spanning segments follow: residues 20–40 (VGLL…TIHL), 54–74 (YLLI…ALIV), 82–102 (HFPL…LIIV), and 107–127 (PIDT…LYLA).

This sequence belongs to the PsiE family.

It localises to the cell inner membrane. The chain is Protein PsiE homolog from Serratia proteamaculans (strain 568).